We begin with the raw amino-acid sequence, 515 residues long: MSTIIAAPGRVSLDDLARVYAGATLELDPSYWPDVEAAAAIVAKAAQGAEPVYGINTGFGKLASKRIPPDQTAQLQRNLILSHCCGVGPVTPEAVVRLMMALKIISLGRGASGVRREIIEQLQAMLARGVCPFVPQQGSVGASGDLAPLAHMTAVMIGEGQAFVDGRLVPGREALAHAGLAPVTLGPKEGLALINGTQFSTAYALAGLLRAHDLLKAALVTGALSVDAAMASTAPFRPEIQALRGHPGQIAAGRVLTELLDGSAIRLSHLEGDERVQDPYCLRCQPQVAGAALDLLTQTARTLVTEANAVTDNPLVLVVTGEIISGGNFHAEPVAFAADQIALALSELGAISERRIATLVDPALNFGLPPFLTPQPGLNSGFMIAEVTAAALFAENKQRALPCSIDSTPTSANQEDHVSMAAHAARRLHDMADNLAHIIGIELLVAAQGIELRVPHGTSAALSAVIGALRVHVPALENDRYMADDLAKAAAIVAGGVLADAARDALGRDPFPKLG.

Positions 142–144 (ASG) form a cross-link, 5-imidazolinone (Ala-Gly). Ser143 carries the 2,3-didehydroalanine (Ser) modification.

The protein belongs to the PAL/histidase family. Post-translationally, contains an active site 4-methylidene-imidazol-5-one (MIO), which is formed autocatalytically by cyclization and dehydration of residues Ala-Ser-Gly.

It localises to the cytoplasm. The enzyme catalyses L-histidine = trans-urocanate + NH4(+). It participates in amino-acid degradation; L-histidine degradation into L-glutamate; N-formimidoyl-L-glutamate from L-histidine: step 1/3. The polypeptide is Histidine ammonia-lyase (Bradyrhizobium sp. (strain BTAi1 / ATCC BAA-1182)).